Reading from the N-terminus, the 81-residue chain is uncharacterized protein (81 aa).

As to expression, expressed in fetal brain.

This is an uncharacterized protein from Homo sapiens (Human).